The sequence spans 613 residues: Chaperone protein DnaK (613 aa).

The disordered stretch occupies residues 578-613 (MYQSQATQGTSQNSSQNNNSQNNNGDTVDADFKESK). The segment covering 580-602 (QSQATQGTSQNSSQNNNSQNNNG) has biased composition (low complexity).

Belongs to the heat shock protein 70 family.

In terms of biological role, acts as a chaperone. This is Chaperone protein DnaK from Picrophilus torridus (strain ATCC 700027 / DSM 9790 / JCM 10055 / NBRC 100828 / KAW 2/3).